A 537-amino-acid polypeptide reads, in one-letter code: Tyrosine-protein kinase Yes (537 aa).

Residues 1-22 (MGCIKSKEDKGPSIKYRTEPKP) are compositionally biased toward basic and acidic residues. Residues 1-60 (MGCIKSKEDKGPSIKYRTEPKPDPGSQYGADPTQATQSPGIKGPAPNFNSHSMTPFGGSS) are disordered. Glycine 2 carries the N-myristoyl glycine lipid modification. Residue cysteine 3 is the site of S-palmitoyl cysteine; in membrane form attachment. In terms of domain architecture, SH3 spans 85–146 (GGVTVFVALY…PSNYVAPADS (62 aa)). The 98-residue stretch at 152–249 (WYFGKMGRKD…GLCYRLTTVC (98 aa)) folds into the SH2 domain. In terms of domain architecture, Protein kinase spans 271-524 (LRLDVKLGQG…YIQSFLEDYF (254 aa)). ATP-binding positions include 277-285 (LGQGCFGEV) and lysine 299. Catalysis depends on aspartate 390, which acts as the Proton acceptor. Tyrosine 420 carries the phosphotyrosine; by autocatalysis modification. Residue tyrosine 531 is modified to Phosphotyrosine; by CSK.

This sequence belongs to the protein kinase superfamily. Tyr protein kinase family. SRC subfamily. In terms of processing, autophosphorylated at Tyr-420 inducing activation. Post-translationally, palmitoylation at Cys-3 promotes membrane localization.

It is found in the cell membrane. It localises to the cytoplasm. The protein resides in the cytoskeleton. Its subcellular location is the microtubule organizing center. The protein localises to the centrosome. It is found in the cytosol. It localises to the cell junction. It catalyses the reaction L-tyrosyl-[protein] + ATP = O-phospho-L-tyrosyl-[protein] + ADP + H(+). Its function is as follows. Non-receptor protein tyrosine kinase that is involved in the regulation of cell growth and survival, apoptosis, cell-cell adhesion, cytoskeleton remodeling, differentiation, G2/M progression and cytokinesis. The polypeptide is Tyrosine-protein kinase Yes (yes1) (Xenopus laevis (African clawed frog)).